The sequence spans 209 residues: Type III pantothenate kinase (209 aa).

Asp-5–Asn-12 serves as a coordination point for ATP. Substrate contacts are provided by residues Tyr-68 and Gly-72–Arg-75. Asp-74 serves as the catalytic Proton acceptor. A K(+)-binding site is contributed by Asp-89. ATP is bound at residue Ser-92. Thr-144 is a substrate binding site.

It belongs to the type III pantothenate kinase family. Homodimer. Requires NH4(+) as cofactor. The cofactor is K(+).

Its subcellular location is the cytoplasm. It carries out the reaction (R)-pantothenate + ATP = (R)-4'-phosphopantothenate + ADP + H(+). It participates in cofactor biosynthesis; coenzyme A biosynthesis; CoA from (R)-pantothenate: step 1/5. Functionally, catalyzes the phosphorylation of pantothenate (Pan), the first step in CoA biosynthesis. This is Type III pantothenate kinase from Campylobacter jejuni (strain RM1221).